A 121-amino-acid chain; its full sequence is MDQLIQLVEATQQRNDIPEVRPGDTVRIQLKVIEGEKERLQAFEGVVIGDKGMGASKTITVRKISHGVGVERIIPVNSPNIESVTVVRSGKARRAKLFYLRKRTGKAALKVKERKSASAEA.

The protein belongs to the bacterial ribosomal protein bL19 family.

Its function is as follows. This protein is located at the 30S-50S ribosomal subunit interface and may play a role in the structure and function of the aminoacyl-tRNA binding site. In Chlorobaculum tepidum (strain ATCC 49652 / DSM 12025 / NBRC 103806 / TLS) (Chlorobium tepidum), this protein is Large ribosomal subunit protein bL19.